Here is a 235-residue protein sequence, read N- to C-terminus: Glycerol-3-phosphate acyltransferase (235 aa).

The next 6 membrane-spanning stretches (helical) occupy residues 2-22 (FTLIVILAVSYLIGSIPTSII), 56-76 (TVTILDIVKGAIAAISVVVFF), 94-114 (LIAGLSAVFGHVFTVFAGFKG), 126-146 (FGIAPVTTLIVLGVFLLVVFL), 152-172 (VASILAAIAFPVIIAVRKYLF), and 190-210 (FIHDSLDYHLLIFGFIVAAAI).

Belongs to the PlsY family. Probably interacts with PlsX.

It localises to the cell inner membrane. It carries out the reaction an acyl phosphate + sn-glycerol 3-phosphate = a 1-acyl-sn-glycero-3-phosphate + phosphate. It functions in the pathway lipid metabolism; phospholipid metabolism. In terms of biological role, catalyzes the transfer of an acyl group from acyl-phosphate (acyl-PO(4)) to glycerol-3-phosphate (G3P) to form lysophosphatidic acid (LPA). This enzyme utilizes acyl-phosphate as fatty acyl donor, but not acyl-CoA or acyl-ACP. The chain is Glycerol-3-phosphate acyltransferase from Chlorobium phaeobacteroides (strain BS1).